A 568-amino-acid polypeptide reads, in one-letter code: 2-succinyl-5-enolpyruvyl-6-hydroxy-3-cyclohexene-1-carboxylate synthase (568 aa).

It belongs to the TPP enzyme family. MenD subfamily. In terms of assembly, homodimer. Requires Mg(2+) as cofactor. It depends on Mn(2+) as a cofactor. The cofactor is thiamine diphosphate.

The catalysed reaction is isochorismate + 2-oxoglutarate + H(+) = 5-enolpyruvoyl-6-hydroxy-2-succinyl-cyclohex-3-ene-1-carboxylate + CO2. Its pathway is quinol/quinone metabolism; 1,4-dihydroxy-2-naphthoate biosynthesis; 1,4-dihydroxy-2-naphthoate from chorismate: step 2/7. It participates in quinol/quinone metabolism; menaquinone biosynthesis. Functionally, catalyzes the thiamine diphosphate-dependent decarboxylation of 2-oxoglutarate and the subsequent addition of the resulting succinic semialdehyde-thiamine pyrophosphate anion to isochorismate to yield 2-succinyl-5-enolpyruvyl-6-hydroxy-3-cyclohexene-1-carboxylate (SEPHCHC). In Pasteurella multocida (strain Pm70), this protein is 2-succinyl-5-enolpyruvyl-6-hydroxy-3-cyclohexene-1-carboxylate synthase.